The following is a 275-amino-acid chain: Ribosomal RNA small subunit methyltransferase A (275 aa).

S-adenosyl-L-methionine contacts are provided by N19, L21, G46, E71, D94, and N117.

It belongs to the class I-like SAM-binding methyltransferase superfamily. rRNA adenine N(6)-methyltransferase family. RsmA subfamily.

Its subcellular location is the cytoplasm. It carries out the reaction adenosine(1518)/adenosine(1519) in 16S rRNA + 4 S-adenosyl-L-methionine = N(6)-dimethyladenosine(1518)/N(6)-dimethyladenosine(1519) in 16S rRNA + 4 S-adenosyl-L-homocysteine + 4 H(+). In terms of biological role, specifically dimethylates two adjacent adenosines (A1518 and A1519) in the loop of a conserved hairpin near the 3'-end of 16S rRNA in the 30S particle. May play a critical role in biogenesis of 30S subunits. This chain is Ribosomal RNA small subunit methyltransferase A, found in Burkholderia multivorans (strain ATCC 17616 / 249).